A 220-amino-acid polypeptide reads, in one-letter code: MAYRDQPLGELALSIPRASALFRKYDMDYCCGGKQTLARAAARKELDVEVIEAELAKLAEQPIEKDWRSAPLAEIIDHIIVRYHDRHREQLPELILQATKVERVHADKPSVPKGLTKYLTMLHEELSSHMMKEEQILFPMIKQGMGSQAMGPISVMESEHDEAGELLEVIKHTTNNVTPPPEACTTWKAMYNGINELIDDLMDHISLENNVLFPRALAGE.

Belongs to the RIC family. YtfE subfamily. Homodimer.

It is found in the cytoplasm. In terms of biological role, di-iron-containing protein involved in the repair of iron-sulfur clusters damaged by oxidative and nitrosative stress conditions. The sequence is that of Iron-sulfur cluster repair protein YtfE from Shigella boydii serotype 18 (strain CDC 3083-94 / BS512).